The sequence spans 425 residues: tRNA(Ile)-lysidine synthase (425 aa).

27–32 is a binding site for ATP; sequence SGGLDS.

This sequence belongs to the tRNA(Ile)-lysidine synthase family.

It is found in the cytoplasm. The catalysed reaction is cytidine(34) in tRNA(Ile2) + L-lysine + ATP = lysidine(34) in tRNA(Ile2) + AMP + diphosphate + H(+). Functionally, ligates lysine onto the cytidine present at position 34 of the AUA codon-specific tRNA(Ile) that contains the anticodon CAU, in an ATP-dependent manner. Cytidine is converted to lysidine, thus changing the amino acid specificity of the tRNA from methionine to isoleucine. The polypeptide is tRNA(Ile)-lysidine synthase (Streptococcus pneumoniae serotype 2 (strain D39 / NCTC 7466)).